Reading from the N-terminus, the 337-residue chain is Anthranilate phosphoribosyltransferase (337 aa).

5-phospho-alpha-D-ribose 1-diphosphate contacts are provided by residues G80, 83–84, T88, 90–93, 108–116, and S120; these read GD, NIST, and KHGNRAVSS. G80 serves as a coordination point for anthranilate. S92 contacts Mg(2+). N111 contacts anthranilate. Residue R166 coordinates anthranilate. Residues D224 and E225 each coordinate Mg(2+).

The protein belongs to the anthranilate phosphoribosyltransferase family. Homodimer. Mg(2+) is required as a cofactor.

It catalyses the reaction N-(5-phospho-beta-D-ribosyl)anthranilate + diphosphate = 5-phospho-alpha-D-ribose 1-diphosphate + anthranilate. The protein operates within amino-acid biosynthesis; L-tryptophan biosynthesis; L-tryptophan from chorismate: step 2/5. In terms of biological role, catalyzes the transfer of the phosphoribosyl group of 5-phosphorylribose-1-pyrophosphate (PRPP) to anthranilate to yield N-(5'-phosphoribosyl)-anthranilate (PRA). The chain is Anthranilate phosphoribosyltransferase from Anaeromyxobacter sp. (strain K).